The sequence spans 947 residues: DNA mismatch repair protein MutS (947 aa).

ATP is bound at residue 620–627 (GPNMSGKS).

This sequence belongs to the DNA mismatch repair MutS family.

Functionally, this protein is involved in the repair of mismatches in DNA. It is possible that it carries out the mismatch recognition step. This protein has a weak ATPase activity. The chain is DNA mismatch repair protein MutS from Clostridioides difficile (strain 630) (Peptoclostridium difficile).